The primary structure comprises 236 residues: Small ribosomal subunit protein uS2c (236 aa).

Belongs to the universal ribosomal protein uS2 family.

It localises to the plastid. The protein resides in the chloroplast. In Buxus microphylla (Littleleaf boxwood), this protein is Small ribosomal subunit protein uS2c (rps2).